The sequence spans 384 residues: Lipid-A-disaccharide synthase (384 aa).

The protein belongs to the LpxB family.

It carries out the reaction a lipid X + a UDP-2-N,3-O-bis[(3R)-3-hydroxyacyl]-alpha-D-glucosamine = a lipid A disaccharide + UDP + H(+). It participates in bacterial outer membrane biogenesis; LPS lipid A biosynthesis. In terms of biological role, condensation of UDP-2,3-diacylglucosamine and 2,3-diacylglucosamine-1-phosphate to form lipid A disaccharide, a precursor of lipid A, a phosphorylated glycolipid that anchors the lipopolysaccharide to the outer membrane of the cell. The chain is Lipid-A-disaccharide synthase from Gloeothece citriformis (strain PCC 7424) (Cyanothece sp. (strain PCC 7424)).